A 525-amino-acid chain; its full sequence is Peptide chain release factor 3 (525 aa).

The tr-type G domain occupies 9–276 (AKRRTFAIIS…GFTRYAPAPQ (268 aa)). Residues 18–25 (SHPDAGKT), 86–90 (DTPGH), and 140–143 (NKFD) each bind GTP.

The protein belongs to the TRAFAC class translation factor GTPase superfamily. Classic translation factor GTPase family. PrfC subfamily.

The protein localises to the cytoplasm. Functionally, increases the formation of ribosomal termination complexes and stimulates activities of RF-1 and RF-2. It binds guanine nucleotides and has strong preference for UGA stop codons. It may interact directly with the ribosome. The stimulation of RF-1 and RF-2 is significantly reduced by GTP and GDP, but not by GMP. The protein is Peptide chain release factor 3 of Francisella tularensis subsp. tularensis (strain FSC 198).